An 88-amino-acid polypeptide reads, in one-letter code: Small ribosomal subunit protein uS15 (88 aa).

It belongs to the universal ribosomal protein uS15 family. As to quaternary structure, part of the 30S ribosomal subunit. Forms a bridge to the 50S subunit in the 70S ribosome, contacting the 23S rRNA.

In terms of biological role, one of the primary rRNA binding proteins, it binds directly to 16S rRNA where it helps nucleate assembly of the platform of the 30S subunit by binding and bridging several RNA helices of the 16S rRNA. Forms an intersubunit bridge (bridge B4) with the 23S rRNA of the 50S subunit in the ribosome. This is Small ribosomal subunit protein uS15 from Mesomycoplasma hyopneumoniae (strain 232) (Mycoplasma hyopneumoniae).